The chain runs to 214 residues: Small ribosomal subunit protein uS2 (214 aa).

Belongs to the universal ribosomal protein uS2 family.

The protein is Small ribosomal subunit protein uS2 of Methanococcoides burtonii (strain DSM 6242 / NBRC 107633 / OCM 468 / ACE-M).